Here is a 192-residue protein sequence, read N- to C-terminus: ER protein translocation subcomplex subunit sec67 (192 aa).

As to quaternary structure, component of the heterotetrameric Sec62/63complex composed of sec62, sec63, sec66 and sec72. The Sec62/63 complex associates with the Sec61 complex to form the Sec complex.

Its subcellular location is the cytoplasm. It is found in the nucleus. In terms of biological role, acts as a non-essential component of the Sec62/63 complex which is involved in SRP-independent post-translational translocation across the endoplasmic reticulum (ER) and functions together with the Sec61 complex and bip1 in a channel-forming translocon complex. A cycle of assembly and disassembly of Sec62/63 complex from sec61 may govern the activity of the translocon. sec72 may be involved in signal peptide recognition for a defined subset of leader peptides, or may increase the efficiency of unusual or 'difficult' secretory precursors to the translocation pore, it may be that this protein binds charged leader peptides to the membrane until they engage the translocation apparatus. This chain is ER protein translocation subcomplex subunit sec67 (sec67), found in Schizosaccharomyces pombe (strain 972 / ATCC 24843) (Fission yeast).